We begin with the raw amino-acid sequence, 424 residues long: Serine--tRNA ligase (424 aa).

An L-serine-binding site is contributed by 231–233 (TAE). An ATP-binding site is contributed by 262–264 (RSE). Glu-285 provides a ligand contact to L-serine. 349–352 (EISS) is a binding site for ATP. Residue Ser-385 coordinates L-serine.

The protein belongs to the class-II aminoacyl-tRNA synthetase family. Type-1 seryl-tRNA synthetase subfamily. As to quaternary structure, homodimer. The tRNA molecule binds across the dimer.

The protein localises to the cytoplasm. It carries out the reaction tRNA(Ser) + L-serine + ATP = L-seryl-tRNA(Ser) + AMP + diphosphate + H(+). The enzyme catalyses tRNA(Sec) + L-serine + ATP = L-seryl-tRNA(Sec) + AMP + diphosphate + H(+). It functions in the pathway aminoacyl-tRNA biosynthesis; selenocysteinyl-tRNA(Sec) biosynthesis; L-seryl-tRNA(Sec) from L-serine and tRNA(Sec): step 1/1. Its function is as follows. Catalyzes the attachment of serine to tRNA(Ser). Is also able to aminoacylate tRNA(Sec) with serine, to form the misacylated tRNA L-seryl-tRNA(Sec), which will be further converted into selenocysteinyl-tRNA(Sec). The polypeptide is Serine--tRNA ligase (Bacillus cereus (strain AH187)).